A 273-amino-acid chain; its full sequence is MTKDILDADFIKEMAKTTSNLYRLGWDERNGGNITYLLDEKEVVEYLDVKQIIRTIPMDFDGEKLAGKYFLVTGSGKYFKNVEEAPAVNLGVIQVSEDGKAVHLLWGYTDGGLPTSELPAHFMSHIARLSVDPENRVVMHCHATHLLAMTFTHELTERAFTRTLWQMCTECLVVFPEGVGIIPWLVPGTNDIGKATSEKMKENRLIVWPHHGIYGAGQSMDETFGLIETAEKAAEVYTIVMSQGGIKQAITDEQLKALGERFGVEAKAGYLNN.

The active site involves E117. The Zn(2+) site is built by H140, H142, and H211.

The protein belongs to the aldolase class II family. RhaD subfamily. Zn(2+) serves as cofactor.

The protein resides in the cytoplasm. It catalyses the reaction L-rhamnulose 1-phosphate = (S)-lactaldehyde + dihydroxyacetone phosphate. Its pathway is carbohydrate degradation; L-rhamnose degradation; glycerone phosphate from L-rhamnose: step 3/3. In terms of biological role, catalyzes the reversible cleavage of L-rhamnulose-1-phosphate to dihydroxyacetone phosphate (DHAP) and L-lactaldehyde. This chain is Rhamnulose-1-phosphate aldolase, found in Listeria innocua serovar 6a (strain ATCC BAA-680 / CLIP 11262).